We begin with the raw amino-acid sequence, 2237 residues long: Zinc finger protein 318 (2237 aa).

Composition is skewed to low complexity over residues 1–12 (MYRSGSRSSVSS) and 30–39 (GASSGPTRRP). The segment at 1–221 (MYRSGSRSSV…DMDRDDLTDD (221 aa)) is disordered. Positions 1–1114 (MYRSGSRSSV…THMHNKKHTQ (1114 aa)) are interaction with AR. Ser40 carries the post-translational modification Phosphoserine. The span at 53–66 (PARRHRSPSGHRGR) shows a compositional bias: basic residues. 3 positions are modified to phosphoserine: Ser69, Ser109, and Ser111. Positions 140–156 (IRGESRADFARDGRGDH) are enriched in basic and acidic residues. 2 positions are modified to phosphoserine: Ser167 and Ser205. Tyr237 is modified (phosphotyrosine). Phosphoserine is present on residues Ser239 and Ser246. The tract at residues 263 to 350 (LHRPEFSPQS…SPRFLDPEFR (88 aa)) is disordered. 2 stretches are compositionally biased toward basic and acidic residues: residues 274–290 (CHDE…DKLK) and 297–317 (RSEE…EKVH). Polar residues predominate over residues 321–332 (GDHSSFTSGTRN). Residues 348-376 (EFRELDLARRKREEEEEQSRSLSQELVGV) adopt a coiled-coil conformation. Phosphoserine occurs at positions 497, 502, 531, and 557. 2 disordered regions span residues 551 to 612 (QEKR…ESLE) and 645 to 732 (QERL…TKNS). The segment covering 560 to 576 (DIEDEEKFLYGDEEEDI) has biased composition (acidic residues). Glycyl lysine isopeptide (Lys-Gly) (interchain with G-Cter in SUMO2) cross-links involve residues Lys577, Lys583, Lys596, and Lys607. Residues 577–586 (KSESPLKSLE) are compositionally biased toward basic and acidic residues. Positions 592–602 (GTRQKANSLPS) are enriched in polar residues. Basic and acidic residues-rich tracts occupy residues 658–677 (SADR…HFSA) and 692–706 (RSSD…ETHH). Thr865 carries the post-translational modification Phosphothreonine. Residues 904-1003 (EKNRASQKQK…SELDKVAQIL (100 aa)) adopt a coiled-coil conformation. Composition is skewed to basic and acidic residues over residues 945–964 (QQGE…KDPL), 1013–1037 (KSSN…EKEL), and 1047–1056 (KESKMNEKSC). Disordered stretches follow at residues 945–966 (QQGE…PLLM) and 1013–1072 (KSSN…TVKQ). Residue Ser1032 is modified to Phosphoserine. Residues 1058 to 1072 (KSPSSTESLQPTVKQ) are compositionally biased toward polar residues. Ser1059 carries the phosphoserine modification. 2 consecutive Matrin-type zinc fingers follow at residues 1085 to 1119 (AGSH…LDPY) and 1158 to 1180 (FYCQ…VKGH). Disordered regions lie at residues 1245 to 1289 (VKED…KKEP), 1302 to 1342 (SWKK…VGKA), and 1366 to 1395 (TTST…VSKP). Composition is skewed to basic and acidic residues over residues 1280 to 1289 (QVKEEVKKEP), 1304 to 1313 (KKPEKEEEKG), and 1321 to 1341 (PKED…EVGK). Residue Ser1445 is modified to Phosphoserine. Disordered stretches follow at residues 1449-1497 (KVEL…LSAP), 1614-1651 (HETK…SMSS), 1727-1770 (TSGS…HCQT), and 1790-1867 (EVYQ…MTGH). A compositionally biased stretch (pro residues) spans 1469-1490 (LPPPPPPPPPPPPPPPPPPPQA). Residues 1618–1639 (LSSSTLANGESSSLPRTESSDF) are compositionally biased toward polar residues. Low complexity predominate over residues 1640–1651 (SSTCTLNSSMSS). The segment covering 1734-1749 (DTHKDRPPEGKIRFDL) has biased composition (basic and acidic residues). Positions 1757–1770 (TDSTSHLSDTHCQT) are enriched in polar residues. Residues 1796–1814 (GCRESEMKRKTELKGKVAT) show a composition bias toward basic and acidic residues. Residues 1798–1827 (RESEMKRKTELKGKVATEEEEEEEEEGANS) are a coiled coil. The segment covering 1815-1824 (EEEEEEEEEG) has biased composition (acidic residues). The span at 1828 to 1840 (IEDSNSNHGNRNT) shows a compositional bias: polar residues. Phosphoserine occurs at positions 1878, 1908, 1988, 2044, 2054, 2140, 2143, 2194, and 2206. The interval 2039–2064 (EGAHSSSNSRNGRITSNSLETGHPVE) is disordered. Over residues 2041–2058 (AHSSSNSRNGRITSNSLE) the composition is skewed to polar residues. The disordered stretch occupies residues 2178–2237 (EDNDSALNLVKTPPSGSPSRDQVVGGNVSPREMPEQEAAVDVIPDHTRSNVYNSQDYLNG). The span at 2226–2237 (SNVYNSQDYLNG) shows a compositional bias: polar residues.

As to quaternary structure, homodimer. Heterodimer of isoform 1 and isoform 2. Isoform 1 and isoform 2 interact with AR. Isoform 1 and isoform 2 are highly expressed in testis, moderately expressed in adrenal gland and uterus and faintly expressed in brain, kidney and liver. Isoform 1 is expressed more in adrenal gland, uterus and liver than isoform 2 is. Expression during testicular development of isoform 1 and isoform 2 is restricted to spermatocytes at the pachytene stage of meiotic prophase and to round and elongated spermatids.

Its subcellular location is the nucleus. In terms of biological role, acts as a transcriptional corepressor for AR-mediated transactivation function. May act as a transcriptional regulator during spermatogenesis and in particular, during meiotic division. Its function is as follows. Acts as a transcriptional coactivator for AR-mediated transactivation function. May act as a transcriptional regulator during spermatogenesis and in particular, during meiotic division. This chain is Zinc finger protein 318 (Znf318), found in Mus musculus (Mouse).